The following is a 475-amino-acid chain: Ribulose bisphosphate carboxylase large chain (475 aa).

The propeptide occupies 1–2; the sequence is MS. Proline 3 carries the post-translational modification N-acetylproline. N6,N6,N6-trimethyllysine is present on lysine 14. Residues asparagine 123 and threonine 173 each coordinate substrate. Lysine 175 acts as the Proton acceptor in catalysis. A substrate-binding site is contributed by lysine 177. Mg(2+) contacts are provided by lysine 201, aspartate 203, and glutamate 204. Residue lysine 201 is modified to N6-carboxylysine. Histidine 294 (proton acceptor) is an active-site residue. Substrate contacts are provided by arginine 295, histidine 327, and serine 379.

The protein belongs to the RuBisCO large chain family. Type I subfamily. In terms of assembly, heterohexadecamer of 8 large chains and 8 small chains; disulfide-linked. The disulfide link is formed within the large subunit homodimers. Mg(2+) is required as a cofactor. Post-translationally, the disulfide bond which can form in the large chain dimeric partners within the hexadecamer appears to be associated with oxidative stress and protein turnover.

Its subcellular location is the plastid. It localises to the chloroplast. The catalysed reaction is 2 (2R)-3-phosphoglycerate + 2 H(+) = D-ribulose 1,5-bisphosphate + CO2 + H2O. It catalyses the reaction D-ribulose 1,5-bisphosphate + O2 = 2-phosphoglycolate + (2R)-3-phosphoglycerate + 2 H(+). Functionally, ruBisCO catalyzes two reactions: the carboxylation of D-ribulose 1,5-bisphosphate, the primary event in carbon dioxide fixation, as well as the oxidative fragmentation of the pentose substrate in the photorespiration process. Both reactions occur simultaneously and in competition at the same active site. This chain is Ribulose bisphosphate carboxylase large chain, found in Equisetum arvense (Field horsetail).